The chain runs to 243 residues: Pyridoxine 5'-phosphate synthase (243 aa).

N9 lines the 3-amino-2-oxopropyl phosphate pocket. Residue 11-12 coordinates 1-deoxy-D-xylulose 5-phosphate; the sequence is DH. Residue R20 participates in 3-amino-2-oxopropyl phosphate binding. H45 acts as the Proton acceptor in catalysis. 2 residues coordinate 1-deoxy-D-xylulose 5-phosphate: R47 and H52. The active-site Proton acceptor is E72. T102 is a 1-deoxy-D-xylulose 5-phosphate binding site. H193 serves as the catalytic Proton donor. Residues G194 and 215 to 216 contribute to the 3-amino-2-oxopropyl phosphate site; that span reads GH.

This sequence belongs to the PNP synthase family. In terms of assembly, homooctamer; tetramer of dimers.

The protein resides in the cytoplasm. It carries out the reaction 3-amino-2-oxopropyl phosphate + 1-deoxy-D-xylulose 5-phosphate = pyridoxine 5'-phosphate + phosphate + 2 H2O + H(+). The protein operates within cofactor biosynthesis; pyridoxine 5'-phosphate biosynthesis; pyridoxine 5'-phosphate from D-erythrose 4-phosphate: step 5/5. In terms of biological role, catalyzes the complicated ring closure reaction between the two acyclic compounds 1-deoxy-D-xylulose-5-phosphate (DXP) and 3-amino-2-oxopropyl phosphate (1-amino-acetone-3-phosphate or AAP) to form pyridoxine 5'-phosphate (PNP) and inorganic phosphate. The chain is Pyridoxine 5'-phosphate synthase from Photorhabdus laumondii subsp. laumondii (strain DSM 15139 / CIP 105565 / TT01) (Photorhabdus luminescens subsp. laumondii).